A 312-amino-acid chain; its full sequence is Protein Rep40 (312 aa).

Positions 84 to 239 (DPQYAASVFL…LDHDFGKVTK (156 aa)) constitute an SF3 helicase domain. An ATP-binding site is contributed by 110 to 117 (GPATTGKT). A disordered region spans residues 264-301 (KGGAKKRPAPSDADISEPKRVRESVAQPSTSDAEASIN).

Homooligomer.

Its subcellular location is the host nucleus. The enzyme catalyses ATP + H2O = ADP + phosphate + H(+). Functionally, plays a critical role during packaging of viral DNA into empty capsids, where they are thought to be part of the packaging motor complex. The single stranded genomic DNA is packaged in a 3' to 5' direction and requires the association of viral DNA with Rep40. In Mammalia (AAV-2), this protein is Protein Rep40 (Rep40).